The chain runs to 658 residues: tRNA uridine 5-carboxymethylaminomethyl modification enzyme MnmG (658 aa).

13–18 (GAGHAG) serves as a coordination point for FAD. Residue 285–299 (GPRYCPSVEDKINRF) participates in NAD(+) binding.

The protein belongs to the MnmG family. In terms of assembly, homodimer. Heterotetramer of two MnmE and two MnmG subunits. Requires FAD as cofactor.

It is found in the cytoplasm. NAD-binding protein involved in the addition of a carboxymethylaminomethyl (cmnm) group at the wobble position (U34) of certain tRNAs, forming tRNA-cmnm(5)s(2)U34. The polypeptide is tRNA uridine 5-carboxymethylaminomethyl modification enzyme MnmG (Verminephrobacter eiseniae (strain EF01-2)).